Reading from the N-terminus, the 786-residue chain is Leucine-rich repeat extensin-like protein 2 (786 aa).

Positions 1–28 (MLLFPSTSLRLFFFLFLLFSSCFLQIRG) are cleaved as a signal peptide. Residues N73 and N79 are each glycosylated (N-linked (GlcNAc...) asparagine). LRR repeat units follow at residues 100–124 (TRVV…LGLL), 125–147 (TDLA…TFKH), 149–172 (KLLF…VLSL), 173–196 (PSLK…LFDK), 198–219 (LDAI…MGNS), 221–243 (VSAL…GLMG), 244–267 (KTLN…IGNL), 268–291 (KNVT…IGNM), and 292–315 (KSLE…ICQL). N-linked (GlcNAc...) asparagine glycans are attached at residues N255 and N269. N-linked (GlcNAc...) asparagine glycans are attached at residues N320 and N346. Disordered stretches follow at residues 352–372 (IDGK…SRSV), 390–589 (FKMS…YYAV), 624–645 (PPVY…YYPP), and 694–786 (PPPS…IPYY). A compositionally biased stretch (basic and acidic residues) spans 353–362 (DGKEDQRSSK). A contains the Ser-Pro(4) repeats region spans residues 384–786 (SPPPPSFKMS…SPPPPSIPYY (403 aa)). Pro residues-rich tracts occupy residues 460–477 (YPPP…PPPS), 487–542 (YPPP…PPPK), and 566–589 (SPPP…YYAV). Pro residues-rich tracts occupy residues 694–713 (PPPS…PPST), 720–737 (PASP…PPPK), 752–769 (PTPP…PLPP), and 777–786 (SPPPPSIPYY).

Post-translationally, hydroxylated on proline residues in the S-P-P-P-P repeat. O-glycosylated on hydroxyprolines. In terms of tissue distribution, mostly expressed in roots, also present in stems at low levels. In roots, confined to differentiation zones, the collet, and meristematic cells of tips.

Its subcellular location is the secreted. The protein resides in the cell wall. Functionally, modulates cell morphogenesis by regulating cell wall formation and assembly, and/or growth polarization. Together with LRX2, component of the extracellular mechanism regulating root hair morphogenesis and elongation. In Arabidopsis thaliana (Mouse-ear cress), this protein is Leucine-rich repeat extensin-like protein 2 (LRX2).